We begin with the raw amino-acid sequence, 135 residues long: Small ribosomal subunit protein bS18 (135 aa).

Positions 1–65 (MARPDMGGPK…GDEGGGRRGF (65 aa)) are disordered. Gly residues predominate over residues 9–41 (PKMGGGFGGPRSGGFGGGGGGGGFGGGGFGGGR). Residues 42–61 (GGDRGDRGDRDDRGGDEGGG) are compositionally biased toward basic and acidic residues.

This sequence belongs to the bacterial ribosomal protein bS18 family. As to quaternary structure, part of the 30S ribosomal subunit. Forms a tight heterodimer with protein bS6.

In terms of biological role, binds as a heterodimer with protein bS6 to the central domain of the 16S rRNA, where it helps stabilize the platform of the 30S subunit. This chain is Small ribosomal subunit protein bS18, found in Anaeromyxobacter dehalogenans (strain 2CP-C).